Reading from the N-terminus, the 254-residue chain is MRILVTNDDGIFAEGIYVLAKSLQDVGEVIVVAPNTERSAVGHGITMHHPLRMAGVRFFDTSIEAYSVNGTPADCIKIAIEVLLKDRKPTVVVSGINNGPNLGTDVLYSGTVSAAVEAAILDLPSIAVSMATSKIDQYNHAAEFICKLLSNTLHIEELSDTIINVNYPTIAYSEIKGVKVTNLGIRKYENAFIERLDPRGNAYYWISGKAMELAQDHESDVQAINDNYISITPIHFDLTHFKSFKKLKNLNLEK.

Residues aspartate 8, aspartate 9, serine 39, and asparagine 97 each coordinate a divalent metal cation.

The protein belongs to the SurE nucleotidase family. The cofactor is a divalent metal cation.

It localises to the cytoplasm. It catalyses the reaction a ribonucleoside 5'-phosphate + H2O = a ribonucleoside + phosphate. In terms of biological role, nucleotidase that shows phosphatase activity on nucleoside 5'-monophosphates. This Alkaliphilus metalliredigens (strain QYMF) protein is 5'-nucleotidase SurE.